The chain runs to 185 residues: Elongation factor P (185 aa).

The protein belongs to the elongation factor P family.

Its subcellular location is the cytoplasm. It participates in protein biosynthesis; polypeptide chain elongation. Functionally, involved in peptide bond synthesis. Stimulates efficient translation and peptide-bond synthesis on native or reconstituted 70S ribosomes in vitro. Probably functions indirectly by altering the affinity of the ribosome for aminoacyl-tRNA, thus increasing their reactivity as acceptors for peptidyl transferase. The chain is Elongation factor P from Alkaliphilus oremlandii (strain OhILAs) (Clostridium oremlandii (strain OhILAs)).